A 538-amino-acid polypeptide reads, in one-letter code: Putative outer membrane porin BglH (538 aa).

The N-terminal stretch at 1 to 25 (MFRRNLITSAILLMAPLAFSAQSLA) is a signal peptide. Positions 52 to 82 (KDEEKKKYTPATVNRSVSTNDQGYAANPFPT) are disordered. A compositionally biased stretch (polar residues) spans 62 to 73 (ATVNRSVSTNDQ).

This sequence belongs to the porin LamB (TC 1.B.3) family.

The protein resides in the cell outer membrane. Its function is as follows. May be a sugar porin with a broad carbohydrate specificity. The chain is Putative outer membrane porin BglH (bglH) from Shigella flexneri serotype 5b (strain 8401).